The sequence spans 433 residues: MSDKLSYKVADISLADWGRKAIEIAENEMPGLMKMREMYSESKPLKGARIAGCLHMTLQTAVLIETLTAIGAEVQWSSCNIFSTQDHAAAAIAKTGVPVYAWKGETDEEYIWCIEQTIYFKDGKPLNMILDDGGDLTNLVHTKYPQLLKGIKGISEETTTGVHNLYKMKSSGTLQVPAINVNDSVTKSKFDNLYGCRESLIDGIKRATDVMIAGKVAVVAGYGDVGKGCAQALRAFGARVLITEIDPINALQAAMEGYEVTTMDEASKEGNIFVTTTGCADIVEGRHFENMKDDSIVCNIGHFDVELDVKWLNDNAAKKINIKPQVDRYLLKNGRHIILLAEGRLVNLGCAMGHPSFVMSNSFTNQVMAQIELWTNTDKYPVGVYFLPKKLDEAVAAAHLDKLGVKLTKLTDKQAKYLGLDKEGPFKPDHYRY.

Positions 57, 132, 157, 187, and 191 each coordinate substrate. Residues 184 to 351 (SVTKSKFDNL…EGRLVNLGCA (168 aa)) form an NAD binding region.

The protein belongs to the adenosylhomocysteinase family. In terms of assembly, homotetramer. Requires NAD(+) as cofactor.

It is found in the cytoplasm. The enzyme catalyses S-adenosyl-L-homocysteine + H2O = L-homocysteine + adenosine. Its pathway is amino-acid biosynthesis; L-homocysteine biosynthesis; L-homocysteine from S-adenosyl-L-homocysteine: step 1/1. In terms of biological role, catalyzes the hydrolysis of S-adenosyl-L-homocysteine to form adenosine and homocysteine. Binds copper ions. The chain is Adenosylhomocysteinase B (ahcy-b) from Xenopus laevis (African clawed frog).